The primary structure comprises 354 residues: Rhodopsin (354 aa).

Topologically, residues 1 to 36 (MNGTEGENFYVPMSNKTGVVRNPFEYPQYYLADHWM) are extracellular. N-linked (GlcNAc...) asparagine glycosylation is found at N2 and N15. Residues 37–61 (FAVLAAYMFFLIITGFPVNFLTLFV) traverse the membrane as a helical segment. Residues 62–73 (TIQNKKLRQPLN) lie on the Cytoplasmic side of the membrane. A helical membrane pass occupies residues 74–96 (YILLNLAVANLFMVFGGFTTTLI). At 97–110 (TSMNGYFVFGSTGC) the chain is on the extracellular side. The cysteines at positions 110 and 187 are disulfide-linked. The helical transmembrane segment at 111 to 133 (NLEGFFATLGGEISLWSLVVLAI) threads the bilayer. The short motif at 134–136 (ERY) is the 'Ionic lock' involved in activated form stabilization element. Over 134–152 (ERYVVVCKPMSNFRFGSQH) the chain is Cytoplasmic. Residues 153–173 (AIAGVSLTWVMAMACAAPPLV) traverse the membrane as a helical segment. At 174–202 (GWSRYIPEGLQCSCGIDYYTPKPEINNVS) the chain is on the extracellular side. N200 carries N-linked (GlcNAc...) asparagine glycosylation. A helical transmembrane segment spans residues 203-224 (FVIYMFVVHFSIPLTIIFFCYG). The Cytoplasmic segment spans residues 225–252 (RLVCTVKAAAAQQQESETTQRAEREVTR). The chain crosses the membrane as a helical span at residues 253–274 (MVVIMVIGFLICWLPYASVALY). At 275–286 (IFNNQGSEFGPV) the chain is on the extracellular side. A helical transmembrane segment spans residues 287-308 (FMTIPSFFAKSSALYNPLIYIL). K296 is subject to N6-(retinylidene)lysine. Topologically, residues 309–354 (MNKQFRNCMITTLCCGKNPFEEEESTSASASKTEASSVSSSQVSPA) are cytoplasmic. S-palmitoyl cysteine attachment occurs at residues C322 and C323. The tract at residues 333–354 (STSASASKTEASSVSSSQVSPA) is disordered. Residues 334–354 (TSASASKTEASSVSSSQVSPA) are compositionally biased toward low complexity.

The protein belongs to the G-protein coupled receptor 1 family. Opsin subfamily. Post-translationally, phosphorylated on some or all of the serine and threonine residues present in the C-terminal region. In terms of processing, contains one covalently linked retinal chromophore.

The protein resides in the membrane. Its subcellular location is the cell projection. It localises to the cilium. The protein localises to the photoreceptor outer segment. Photoreceptor required for image-forming vision at low light intensity. While most salt water fish species use retinal as chromophore, most freshwater fish use 3-dehydroretinal, or a mixture of retinal and 3-dehydroretinal. Light-induced isomerization of 11-cis to all-trans retinal triggers a conformational change that activates signaling via G-proteins. Subsequent receptor phosphorylation mediates displacement of the bound G-protein alpha subunit by arrestin and terminates signaling. This Galeus melastomus (Blackmouth catshark) protein is Rhodopsin (rho).